Here is a 440-residue protein sequence, read N- to C-terminus: ATP-dependent protease ATPase subunit HslU (440 aa).

Residues Ile18 and 60–65 (GVGKTE) each bind ATP. Positions 138–159 (RAQSFDQEDPSAGTRQKLRKKL) are disordered. ATP is bound by residues Asp252, Glu318, and Arg390.

Belongs to the ClpX chaperone family. HslU subfamily. As to quaternary structure, a double ring-shaped homohexamer of HslV is capped on each side by a ring-shaped HslU homohexamer. The assembly of the HslU/HslV complex is dependent on binding of ATP.

The protein resides in the cytoplasm. ATPase subunit of a proteasome-like degradation complex; this subunit has chaperone activity. The binding of ATP and its subsequent hydrolysis by HslU are essential for unfolding of protein substrates subsequently hydrolyzed by HslV. HslU recognizes the N-terminal part of its protein substrates and unfolds these before they are guided to HslV for hydrolysis. The polypeptide is ATP-dependent protease ATPase subunit HslU (Alkalilimnicola ehrlichii (strain ATCC BAA-1101 / DSM 17681 / MLHE-1)).